A 461-amino-acid polypeptide reads, in one-letter code: Bifunctional enzyme LpxC/FabZ (461 aa).

The interval 1–302 (MLKQKTLKDS…FARQMRKEIR (302 aa)) is UDP-3-O-acyl-N-acetylglucosamine deacetylase. 3 residues coordinate Zn(2+): histidine 78, histidine 260, and aspartate 264. The active-site Proton donor is histidine 287. A 3-hydroxyacyl-[acyl-carrier-protein] dehydratase region spans residues 303–461 (LHEIQAPTYD…EFMAQIVKNK (159 aa)). Histidine 364 is a catalytic residue.

It in the N-terminal section; belongs to the LpxC family. In the C-terminal section; belongs to the thioester dehydratase family. It depends on Zn(2+) as a cofactor.

Its subcellular location is the cytoplasm. The catalysed reaction is a UDP-3-O-[(3R)-3-hydroxyacyl]-N-acetyl-alpha-D-glucosamine + H2O = a UDP-3-O-[(3R)-3-hydroxyacyl]-alpha-D-glucosamine + acetate. The enzyme catalyses a (3R)-hydroxyacyl-[ACP] = a (2E)-enoyl-[ACP] + H2O. It functions in the pathway glycolipid biosynthesis; lipid IV(A) biosynthesis; lipid IV(A) from (3R)-3-hydroxytetradecanoyl-[acyl-carrier-protein] and UDP-N-acetyl-alpha-D-glucosamine: step 2/6. Functionally, catalyzes the hydrolysis of UDP-3-O-myristoyl-N-acetylglucosamine to form UDP-3-O-myristoylglucosamine and acetate, the committed step in lipid A biosynthesis. In terms of biological role, involved in unsaturated fatty acids biosynthesis. Catalyzes the dehydration of short chain beta-hydroxyacyl-ACPs and long chain saturated and unsaturated beta-hydroxyacyl-ACPs. The protein is Bifunctional enzyme LpxC/FabZ (lpxC/fabZ) of Bacteroides thetaiotaomicron (strain ATCC 29148 / DSM 2079 / JCM 5827 / CCUG 10774 / NCTC 10582 / VPI-5482 / E50).